Here is a 185-residue protein sequence, read N- to C-terminus: Acireductone dioxygenase (185 aa).

A disordered region spans residues 1–22; that stretch reads MSRLSIHPEGSTNATSPAEPLL. Fe(2+) is bound by residues His-102, His-104, Glu-108, and His-146. Residues His-102, His-104, Glu-108, and His-146 each contribute to the Ni(2+) site.

The protein belongs to the acireductone dioxygenase (ARD) family. Monomer. The cofactor is Fe(2+). It depends on Ni(2+) as a cofactor.

It carries out the reaction 1,2-dihydroxy-5-(methylsulfanyl)pent-1-en-3-one + O2 = 3-(methylsulfanyl)propanoate + CO + formate + 2 H(+). The enzyme catalyses 1,2-dihydroxy-5-(methylsulfanyl)pent-1-en-3-one + O2 = 4-methylsulfanyl-2-oxobutanoate + formate + 2 H(+). Its pathway is amino-acid biosynthesis; L-methionine biosynthesis via salvage pathway; L-methionine from S-methyl-5-thio-alpha-D-ribose 1-phosphate: step 5/6. Catalyzes 2 different reactions between oxygen and the acireductone 1,2-dihydroxy-3-keto-5-methylthiopentene (DHK-MTPene) depending upon the metal bound in the active site. Fe-containing acireductone dioxygenase (Fe-ARD) produces formate and 2-keto-4-methylthiobutyrate (KMTB), the alpha-ketoacid precursor of methionine in the methionine recycle pathway. Ni-containing acireductone dioxygenase (Ni-ARD) produces methylthiopropionate, carbon monoxide and formate, and does not lie on the methionine recycle pathway. The chain is Acireductone dioxygenase from Prochlorococcus marinus (strain MIT 9313).